We begin with the raw amino-acid sequence, 61 residues long: Calprismin (61 aa).

In terms of processing, glycosylated. As to expression, expressed by the calcifying mantle epithelium and incorporated into the shell's calcitic prismatic layer.

This chain is Calprismin, found in Pinna nobilis (Noble pen shell).